A 147-amino-acid polypeptide reads, in one-letter code: Hemoglobin subunit delta (147 aa).

In terms of domain architecture, Globin spans 3-147; sequence HLTGEEKAAV…VANALAHKYH (145 aa). Heme b contacts are provided by His64 and His93.

Belongs to the globin family. In terms of assembly, heterotetramer of two delta chains and two alpha chains. In terms of tissue distribution, red blood cells.

The protein is Hemoglobin subunit delta (HBD) of Ailuropoda melanoleuca (Giant panda).